The following is a 109-amino-acid chain: Aquaporin-2 (109 aa).

Residues 1-6 (SVAFSR) lie on the Cytoplasmic side of the membrane. The helical transmembrane segment at 7–27 (AVFAEFLATLLFVFFGLGSAL) threads the bilayer. Residues 28–35 (NWPQALPS) lie on the Extracellular side of the membrane. Residues 36-54 (VLQIAMAFGLGIGTLVQAL) form a helical membrane-spanning segment. The Cytoplasmic portion of the chain corresponds to 55-59 (GHVSG). The segment at residues 60–69 (AHINPAVTVA) is an intramembrane region (discontinuously helical). The short motif at 63 to 65 (NPA) is the NPA 1 element. The Cytoplasmic portion of the chain corresponds to 70–80 (CLVGCHVSFLR). The helical transmembrane segment at 81-102 (AAFYVAAQLLGAVAGAALLHEI) threads the bilayer. Residues 103–109 (TPPHVRG) are Extracellular-facing.

The protein belongs to the MIP/aquaporin (TC 1.A.8) family. In terms of assembly, homotetramer. In terms of processing, serine phosphorylation is necessary and sufficient for expression at the apical membrane. Endocytosis is not phosphorylation-dependent. Post-translationally, N-glycosylated.

It is found in the apical cell membrane. It localises to the basolateral cell membrane. Its subcellular location is the cell membrane. The protein localises to the cytoplasmic vesicle membrane. The protein resides in the golgi apparatus. It is found in the trans-Golgi network membrane. The enzyme catalyses H2O(in) = H2O(out). It carries out the reaction glycerol(in) = glycerol(out). Its function is as follows. Forms a water-specific channel that provides the plasma membranes of renal collecting duct with high permeability to water, thereby permitting water to move in the direction of an osmotic gradient. Plays an essential role in renal water homeostasis. Could also be permeable to glycerol. This chain is Aquaporin-2, found in Canis lupus familiaris (Dog).